The primary structure comprises 216 residues: Thioredoxin-like 2, chloroplastic (216 aa).

Residues 1 to 58 (MAEALLPLPRRLVVTASTPACSSASSSTSPSPHCLLSRANPRPPRLAAPSPPRHRRLK) constitute a chloroplast transit peptide. The segment covering 19 to 40 (PACSSASSSTSPSPHCLLSRAN) has biased composition (low complexity). The segment at 19–70 (PACSSASSSTSPSPHCLLSRANPRPPRLAAPSPPRHRRLKAHAAVSDKSEQP) is disordered. Residues 41-51 (PRPPRLAAPSP) show a composition bias toward pro residues. The region spanning 61 to 188 (AAVSDKSEQP…LKDAIAVHNT (128 aa)) is the Thioredoxin domain. Catalysis depends on nucleophile residues Cys111 and Cys114. Residues Cys111 and Cys114 are joined by a disulfide bond.

This sequence belongs to the thioredoxin family.

The protein localises to the plastid. It is found in the chloroplast. Probable thiol-disulfide oxidoreductase that may participate in various redox reactions. This chain is Thioredoxin-like 2, chloroplastic, found in Oryza sativa subsp. japonica (Rice).